We begin with the raw amino-acid sequence, 354 residues long: Uroporphyrinogen decarboxylase (354 aa).

Substrate contacts are provided by residues 28-32 (RQAGR), aspartate 78, tyrosine 155, serine 210, and histidine 325.

The protein belongs to the uroporphyrinogen decarboxylase family. Homodimer.

The protein localises to the cytoplasm. It carries out the reaction uroporphyrinogen III + 4 H(+) = coproporphyrinogen III + 4 CO2. Its pathway is porphyrin-containing compound metabolism; protoporphyrin-IX biosynthesis; coproporphyrinogen-III from 5-aminolevulinate: step 4/4. Catalyzes the decarboxylation of four acetate groups of uroporphyrinogen-III to yield coproporphyrinogen-III. This chain is Uroporphyrinogen decarboxylase, found in Crocosphaera subtropica (strain ATCC 51142 / BH68) (Cyanothece sp. (strain ATCC 51142)).